The chain runs to 174 residues: UPF0398 protein LACR_0544 (174 aa).

The protein belongs to the UPF0398 family.

The polypeptide is UPF0398 protein LACR_0544 (Lactococcus lactis subsp. cremoris (strain SK11)).